An 877-amino-acid polypeptide reads, in one-letter code: Transcriptional corepressor SEUSS (877 aa).

Disordered stretches follow at residues 1–42 (MVPS…VSPR) and 272–295 (LKSMPQQRPQLPQQFQQQNLPLRP). Over residues 272-292 (LKSMPQQRPQLPQQFQQQNLP) the composition is skewed to low complexity. The segment at 321 to 563 (PEDNNIEFWR…ETRTGPIESL (243 aa)) is dimerization. Positions 330 to 344 (RKFVAEYFAPNAKKR) match the Nuclear localization signal motif. 3 disordered regions span residues 560-599 (IESLAKFPRRTGPSSALPGPSPQQASDQLRQQQQQQQQQQ), 612-633 (QQTVSQNTNSDQSSRQVALMQG), and 666-753 (GRHQ…NESS). Residues 582-618 (QQASDQLRQQQQQQQQQQQQQQQQQQQQQQQQTVSQN) adopt a coiled-coil conformation. A compositionally biased stretch (low complexity) spans 590–599 (QQQQQQQQQQ). Over residues 614 to 633 (TVSQNTNSDQSSRQVALMQG) the composition is skewed to polar residues. Low complexity-rich tracts occupy residues 688 to 703 (QSPSSSGTMVPSSSQQ) and 711 to 725 (QSPTSSSNNNNPSQN). Polar residues predominate over residues 726 to 741 (GIPSVNHMGSTNSPAM).

The protein belongs to the adn1/SEU family. Forms a corepressor complex with LUG; LUG is the transcription repressor subunit and SEU the specific DNA-binding adapter. Interacts with AGL24-AP1 and SVP-AP1 dimers when complexed to SEU. Interacts with AP1/AGL7 and SEP3/AGL9. Binds to LUH. As to expression, expressed in root, leaves, seedlings, vegetative and reproductive shoot apical meristems, seeds, floral meristems and all floral organs.

The protein localises to the nucleus. It localises to the nucleoplasm. In terms of biological role, DNA-binding adapter subunit of the SEU-LUG transcriptional corepressor of the C class floral homeotic gene AGAMOUS during the early stages of floral meristem development. Is part of the A class cadastral complex that define the boundaries between the A and C class homeotic genes expression and function. Interacts together with APETALA2 and LEUNIG to repress AGAMOUS expression. In association with LUG, regulates petal shape through AGAMOUS-independent mechanisms. Controls cell division during petal development and enable the proper patterning of petal blade vasculature. Required for the proper elaboration of petal polarity along the adaxial/abaxial axis. May act through direct or indirect regulation of PHABULOSA and YAB1 and thus regulate cellular proliferation within the developing petal blade. In association with AINTEGUMENTA (ANT), coordinates patterning cues and cellular proliferation along the three positional axes of the developing gynoecium. Required for the development of the medial ridge and subsequent ovule initiation. The sequence is that of Transcriptional corepressor SEUSS (SEU) from Arabidopsis thaliana (Mouse-ear cress).